A 372-amino-acid chain; its full sequence is Cytochrome b (372 aa).

Helical transmembrane passes span 25–45 (FGSMLLTCLALQTMTGFFLAI), 69–90 (WIMQNIHAISASLFFICIYIHI), 105–125 (WLSGTTLLITLMATAFFGYVL), and 170–190 (FFALHFILPFAIISLSSIHII). 2 residues coordinate heme b: H75 and H89. Residues H174 and H188 each contribute to the heme b site. H193 lines the a ubiquinone pocket. A run of 4 helical transmembrane segments spans residues 218–238 (YKDMLMITSMITLLFIILSFS), 280–300 (LGGTLALLTSVAILTTVPFTH), 312–332 (LSQALFWTLIATFITITWTAS), and 339–358 (FVTISQTTSIIYFSFFITIP).

Belongs to the cytochrome b family. The cytochrome bc1 complex contains 3 respiratory subunits (MT-CYB, CYC1 and UQCRFS1), 2 core proteins (UQCRC1 and UQCRC2) and probably 6 low-molecular weight proteins. Heme b serves as cofactor.

Its subcellular location is the mitochondrion inner membrane. Functionally, component of the ubiquinol-cytochrome c reductase complex (complex III or cytochrome b-c1 complex) that is part of the mitochondrial respiratory chain. The b-c1 complex mediates electron transfer from ubiquinol to cytochrome c. Contributes to the generation of a proton gradient across the mitochondrial membrane that is then used for ATP synthesis. This is Cytochrome b (MT-CYB) from Naja multifasciata (Burrowing cobra).